The chain runs to 139 residues: Large ribosomal subunit protein uL16 (139 aa).

Residues 1 to 16 (MLIPKRTKYRKQHRPV) show a composition bias toward basic residues. The disordered stretch occupies residues 1–22 (MLIPKRTKYRKQHRPVRSGMSK).

It belongs to the universal ribosomal protein uL16 family. Part of the 50S ribosomal subunit.

In terms of biological role, binds 23S rRNA and is also seen to make contacts with the A and possibly P site tRNAs. This is Large ribosomal subunit protein uL16 from Bifidobacterium longum subsp. infantis (strain ATCC 15697 / DSM 20088 / JCM 1222 / NCTC 11817 / S12).